The sequence spans 77 residues: Protein NS4 (77 aa).

The protein localises to the host cytoplasm. It is found in the host nucleus. Its subcellular location is the host nucleolus. Its function is as follows. May function as a nucleic acid binding protein that modulates transcription of genes participating in the IFN response. The chain is Protein NS4 (Segment-9) from Antilocapra americana (Pronghorn).